Here is a 396-residue protein sequence, read N- to C-terminus: Cystathionine beta-lyase (396 aa).

N6-(pyridoxal phosphate)lysine is present on Lys211.

Belongs to the trans-sulfuration enzymes family. Homotetramer. Pyridoxal 5'-phosphate is required as a cofactor.

It is found in the cytoplasm. The enzyme catalyses L,L-cystathionine + H2O = L-homocysteine + pyruvate + NH4(+). The catalysed reaction is an S-substituted L-cysteine + H2O = a thiol + pyruvate + NH4(+). It functions in the pathway amino-acid biosynthesis; L-methionine biosynthesis via de novo pathway; L-homocysteine from L-cystathionine: step 1/1. Its function is as follows. Catalyzes the cleavage of cystathionine to homocysteine, pyruvate and ammonia during methionine biosynthesis. The sequence is that of Cystathionine beta-lyase (metC) from Haemophilus influenzae (strain ATCC 51907 / DSM 11121 / KW20 / Rd).